The primary structure comprises 267 residues: Acetylglutamate kinase (267 aa).

Substrate-binding positions include 53-54, arginine 75, and asparagine 167; that span reads GG.

This sequence belongs to the acetylglutamate kinase family. ArgB subfamily.

The protein resides in the cytoplasm. It catalyses the reaction N-acetyl-L-glutamate + ATP = N-acetyl-L-glutamyl 5-phosphate + ADP. Its pathway is amino-acid biosynthesis; L-arginine biosynthesis; N(2)-acetyl-L-ornithine from L-glutamate: step 2/4. In terms of biological role, catalyzes the ATP-dependent phosphorylation of N-acetyl-L-glutamate. In Shewanella pealeana (strain ATCC 700345 / ANG-SQ1), this protein is Acetylglutamate kinase.